We begin with the raw amino-acid sequence, 1131 residues long: MDIRKFFGVISSGKKPVNETVKNEKTKASEGTVKGKKGVKEAKVNNSGKEDASKPKQHSKKKRIIYDSDSESEETVQVKNAKKKSEKLSLSYKPGKVSQKDPVTYVSETDEDDDFVCKKAASKSKENGVSTNSYLGTSNVKKNEENVKTKNKPLSPIKLTPTSVLDYFGTESVQRSGKKMVTSKRKESSQNTEDSRLNDEAIAKQLQLDEDAELERQLHEDEEFARTLALLDEEPKIKKARKDSEEGEESFSSVQDDLSKAEKQKSPNKAELFSTARKTYSPAKHGKGRASEDAKQPCKSAHRKEACSSPKASAKLALMKAKEESSYNETELLAARRKESATEPKGEKTTPKKTKVSPTKRESVSPEDSEKKRTNYQAYRSYLNREGPKALGSKEIPKGAENCLEGLTFVITGVLESIERDEAKSLIERYGGKVTGNVSKKTNYLVMGRDSGQSKSDKAAALGTKILDEDGLLDLIRTMPGKRSKYEMAAEAEMKKEKSKLERTPQKNDQGKRKISPAKKESESKKCKLTLLKNSPMKAVKKEASTCPRGLDVKETHGNRSSNKEECLLWVDKYKPASLKNIIGQQGDQSCANKLLRWLRNWHKSSPEEKKHAAKFGKLASKDDGSSFKAALLSGPPGVGKTTTASLVCQELGYSYVELNASDTRSKNSLKAVVAESLNNTSIKGFYTSGAAPSVSARHALIMDEVDGMAGNEDRGGIQELIGLIKHTKIPIICMCNDRNHPKIRSLVHYCFDLRFQRPRVEQIKSAMLSIAFKEGLKIPPPAMNEIILGANQDVRQVLHNLSMWCAQSKALTYDQAKADSQRAKKDIRLGPFDVTRKVFAAGEETAHMSLMDKSDLFFHDYSIAPLFVQENYLHVKPVAAGGDMKKHLMLLSRAADSICDGDLVDNQIRSKQNWSLLPTQAIYASVLPGELMRGYMTQFPSFPSWLGKHSSTGKHDRIVQDLSLHMSLRTYSSKRTVNMDYLSHIRDALVRPLTSQGVEGAQHVIKLMDTYYLMKEDFENIMEVSSWGGKPSAFSKLDPKVKAAFTRAYNKEAHLTPYSLQVVKTSRLSTGPALDSEYSEEFQEDDTQSEKEQDAVETDAMIKKKTRSSKPSKSEREKESKKGKGKNWKK.

Disordered regions lie at residues 14–87 (KKPV…KSEK), 92–111 (YKPGKVSQKDPVTYVSETDE), 120–201 (AASK…NDEA), and 225–378 (ARTL…NYQA). Residues 38–54 (GVKEAKVNNSGKEDASK) are compositionally biased toward basic and acidic residues. Residue lysine 49 forms a Glycyl lysine isopeptide (Lys-Gly) (interchain with G-Cter in SUMO2) linkage. Tyrosine 66 carries the post-translational modification Phosphotyrosine. A phosphoserine mark is found at serine 68, serine 70, serine 72, and serine 107. Phosphothreonine is present on threonine 109. Positions 127–138 (NGVSTNSYLGTS) are enriched in polar residues. The residue at position 155 (serine 155) is a Phosphoserine. Phosphothreonine is present on residues threonine 160 and threonine 162. Phosphoserine occurs at positions 163, 172, 189, 244, 250, 253, 281, and 309. Residues 184-201 (KRKESSQNTEDSRLNDEA) are compositionally biased toward basic and acidic residues. The span at 308 to 319 (SSPKASAKLALM) shows a compositional bias: low complexity. 2 stretches are compositionally biased toward basic and acidic residues: residues 334–350 (AARRKESATEPKGEKTT) and 359–373 (TKRESVSPEDSEKKR). Residues 354 to 528 (TKVSPTKRES…KKESESKKCK (175 aa)) are interferon-stimulated-response-element binding region. At serine 365 the chain carries Phosphoserine. The 91-residue stretch at 399 to 489 (GAENCLEGLT…PGKRSKYEMA (91 aa)) folds into the BRCT domain. Residues 491-525 (EAEMKKEKSKLERTPQKNDQGKRKISPAKKESESK) are disordered. Serine 535 is modified (phosphoserine). 635-642 (GPPGVGKT) is a binding site for ATP. The disordered stretch occupies residues 1073-1131 (PALDSEYSEEFQEDDTQSEKEQDAVETDAMIKKKTRSSKPSKSEREKESKKGKGKNWKK). Positions 1078 to 1088 (EYSEEFQEDDT) are enriched in acidic residues. At serine 1090 the chain carries Phosphoserine. Residues 1104–1108 (KKKTR) carry the Nuclear localization signal motif. A compositionally biased stretch (basic and acidic residues) spans 1113-1123 (SKSEREKESKK).

It belongs to the activator 1 large subunit family. In terms of assembly, large subunit of the RFC complex, an heteropentameric complex consisting of RFC1 and four small subunits RFC2, RFC3, RFC4 and RFC5; the RFC complex interacts with PCNA and the interaction involves RFC1.

It is found in the nucleus. Subunit of the replication factor C (RFC) complex which acts during elongation of primed DNA templates by DNA polymerases delta and epsilon, and is necessary for ATP-dependent loading of proliferating cell nuclear antigen (PCNA) onto primed DNA. This subunit binds to the primer-template junction. Binds the PO-B transcription element as well as other GA rich DNA sequences. Can bind single- or double-stranded DNA. In Mus musculus (Mouse), this protein is Replication factor C subunit 1 (Rfc1).